The primary structure comprises 848 residues: Phosphatidate phosphatase LPIN3 (848 aa).

An N-LIP region spans residues 1–108; sequence MNYVGQLAET…VPPRLCTSPI (108 aa). Disordered stretches follow at residues 97–233, 271–298, and 314–373; these read EDVP…SPLR, PEEP…PGVR, and AVDS…NQHL. Positions 135–144 match the Nuclear localization signal motif; it reads GRRKRRRRRK. Residues 135 to 146 show a composition bias toward basic residues; sequence GRRKRRRRRKPR. The span at 151–164 shows a compositional bias: acidic residues; sequence DAVDSSSEELEAGA. 2 positions are modified to phosphoserine: serine 155 and serine 156. Low complexity predominate over residues 165 to 191; it reads ESELTLLEKPTPESPSAQEAEEPSSQP. Serine 218 bears the Phosphoserine mark. A compositionally biased stretch (low complexity) spans 271–282; it reads PEEPSPSSSPSE. Residues 342–358 show a composition bias toward polar residues; the sequence is KSWSWTTPESHTPSGHP. Serine 460 is modified (phosphoserine). Residues 536 to 556 are compositionally biased toward basic and acidic residues; that stretch reads EEHSSQREKAATRKQQGEKTE. Residues 536-568 form a disordered region; sequence EEHSSQREKAATRKQQGEKTEVLSSDDDVPDSP. Positions 587-789 are C-LIP; that stretch reads YKKSLRLSSD…RIFTVNPRGE (203 aa). A DXDXT motif motif is present at residues 641 to 645; it reads DIDGT. An LXXIL motif motif is present at residues 652–656; the sequence is LGHIL.

The protein belongs to the lipin family. Mg(2+) is required as a cofactor. In terms of tissue distribution, significant expression in intestine and other regions of the gastrointestinal tract.

It localises to the nucleus. It catalyses the reaction a 1,2-diacyl-sn-glycero-3-phosphate + H2O = a 1,2-diacyl-sn-glycerol + phosphate. With respect to regulation, inhibited by N-ethylmaleimide. Its function is as follows. Magnesium-dependent phosphatidate phosphatase enzyme which catalyzes the conversion of phosphatidic acid to diacylglycerol during triglyceride, phosphatidylcholine and phosphatidylethanolamine biosynthesis therefore regulates fatty acid metabolism. The sequence is that of Phosphatidate phosphatase LPIN3 from Mus musculus (Mouse).